A 363-amino-acid polypeptide reads, in one-letter code: Chorismate synthase (363 aa).

An NADP(+)-binding site is contributed by arginine 48. FMN-binding positions include 125–127, 238–239, glycine 278, 293–297, and arginine 319; these read RSS, NA, and KPTAS.

Belongs to the chorismate synthase family. Homotetramer. FMNH2 serves as cofactor.

It catalyses the reaction 5-O-(1-carboxyvinyl)-3-phosphoshikimate = chorismate + phosphate. The protein operates within metabolic intermediate biosynthesis; chorismate biosynthesis; chorismate from D-erythrose 4-phosphate and phosphoenolpyruvate: step 7/7. Catalyzes the anti-1,4-elimination of the C-3 phosphate and the C-6 proR hydrogen from 5-enolpyruvylshikimate-3-phosphate (EPSP) to yield chorismate, which is the branch point compound that serves as the starting substrate for the three terminal pathways of aromatic amino acid biosynthesis. This reaction introduces a second double bond into the aromatic ring system. The chain is Chorismate synthase from Acinetobacter baumannii (strain SDF).